The chain runs to 273 residues: Phycobilisome 32.1 kDa linker polypeptide, phycocyanin-associated, rod 2 (273 aa).

The 180-residue stretch at 1–180 folds into the PBS-linker domain; sequence MTSLVSAQRL…VYRGYATSDR (180 aa). One can recognise a CpcD-like domain in the interval 220–273; the sequence is NQMYRLQVIQGAAPGRGTRVRRGKAEYLVSYDNLSAKLQQINRQGDTVTMISLA.

Belongs to the phycobilisome linker protein family. As to quaternary structure, part of 2 PBS rod complexes, the conventional CpcG-PBS rod and a photosystem I-specific CpcL-PBS rod, both of which include ferredoxin--NADP reductase (petH). CpcG-PBS has on average 3 stacked phycocyanin hexamers (PC, CpcA and CpcB). Linker CpcG connects the PC stack to the thylakoid, the hexamers are linked by 1 copy of CpcC1, 1 copy of CpcC2 and the stack is terminated by a single copy of CpcD. The CpcL-PBS has on average 5 stacked phycocyanin hexamers (PC, CpcA and CpcB). Linker CpcL connects the PC stack to the thylakoid, the hexamers are linked by 1 copy of CpcC1, 3 copies of CpcC2 and the stack is terminated by a single copy of CpcD. Interacts with the C-phycocyanin (PC) beta subunit (cpcB), it may fit into the center of the PC hexamer.

Its subcellular location is the cellular thylakoid membrane. In terms of biological role, rod linker protein, associated with phycocyanin. Linker polypeptides determine the state of aggregation and the location of the disk-shaped phycobiliprotein units within the phycobilisome and modulate their spectroscopic properties in order to mediate a directed and optimal energy transfer. This is Phycobilisome 32.1 kDa linker polypeptide, phycocyanin-associated, rod 2 (cpcC2) from Synechocystis sp. (strain ATCC 27184 / PCC 6803 / Kazusa).